Consider the following 672-residue polypeptide: UvrABC system protein B (672 aa).

Positions 26–183 (EGLEDGLAHQ…RRLSELQYVR (158 aa)) constitute a Helicase ATP-binding domain. Residue 39 to 46 (GVTGSGKT) coordinates ATP. A Beta-hairpin motif is present at residues 92 to 115 (YYDYYQPEAYVPSSDTFIEKDASV). The Helicase C-terminal domain occupies 431-597 (QVDDLLSEIN…ALNKKVTDIL (167 aa)). The tract at residues 601–623 (DGPVRSRTKGARGQRAAEPHPDY) is disordered. One can recognise a UVR domain in the interval 632–667 (EQQIQRLETQMYQHAQNLEFEQAAALRDEIHILREQ).

Belongs to the UvrB family. In terms of assembly, forms a heterotetramer with UvrA during the search for lesions. Interacts with UvrC in an incision complex.

It is found in the cytoplasm. Its function is as follows. The UvrABC repair system catalyzes the recognition and processing of DNA lesions. A damage recognition complex composed of 2 UvrA and 2 UvrB subunits scans DNA for abnormalities. Upon binding of the UvrA(2)B(2) complex to a putative damaged site, the DNA wraps around one UvrB monomer. DNA wrap is dependent on ATP binding by UvrB and probably causes local melting of the DNA helix, facilitating insertion of UvrB beta-hairpin between the DNA strands. Then UvrB probes one DNA strand for the presence of a lesion. If a lesion is found the UvrA subunits dissociate and the UvrB-DNA preincision complex is formed. This complex is subsequently bound by UvrC and the second UvrB is released. If no lesion is found, the DNA wraps around the other UvrB subunit that will check the other stand for damage. In Edwardsiella ictaluri (strain 93-146), this protein is UvrABC system protein B.